The following is an 842-amino-acid chain: Type VI secretion system spike protein VgrG2a (842 aa).

Positions 265 to 291 (RSGAGRPFSESRLRGHRRDARVASVSG) are disordered.

This sequence belongs to the VgrG protein family.

In terms of biological role, part of the H2 type VI secretion system (H2-T6SS) specialized secretion system, which delivers several virulence factors in both prokaryotic and eukaryotic cells during infection. May form the spike at the tip of the elongating tube formed by haemolysin co-regulated protein 2a/Hcp2a. In turn, may allow the delivery of the Tle4 antibacterial toxin to target cells where it exerts its toxicity. Also promotes the release of VgrG2b toxin to the host cell. This is Type VI secretion system spike protein VgrG2a from Pseudomonas aeruginosa (strain ATCC 15692 / DSM 22644 / CIP 104116 / JCM 14847 / LMG 12228 / 1C / PRS 101 / PAO1).